The following is a 334-amino-acid chain: tRNA dimethylallyltransferase (334 aa).

An ATP-binding site is contributed by 23-30; the sequence is GPTGAGKT. Residue 25–30 participates in substrate binding; it reads TGAGKT. Interaction with substrate tRNA regions lie at residues 53–56 and 177–181; these read DSAL and QRVQR.

Belongs to the IPP transferase family. Monomer. Mg(2+) is required as a cofactor.

The catalysed reaction is adenosine(37) in tRNA + dimethylallyl diphosphate = N(6)-dimethylallyladenosine(37) in tRNA + diphosphate. Catalyzes the transfer of a dimethylallyl group onto the adenine at position 37 in tRNAs that read codons beginning with uridine, leading to the formation of N6-(dimethylallyl)adenosine (i(6)A). The chain is tRNA dimethylallyltransferase from Polynucleobacter necessarius subsp. necessarius (strain STIR1).